Reading from the N-terminus, the 512-residue chain is 2,3-bisphosphoglycerate-independent phosphoglycerate mutase (512 aa).

Mn(2+) contacts are provided by D12 and S62. S62 functions as the Phosphoserine intermediate in the catalytic mechanism. Substrate-binding positions include H123, 153–154 (RD), R185, R191, 260–263 (RPDR), and K333. Residues D400, H404, D441, H442, and H460 each coordinate Mn(2+).

Belongs to the BPG-independent phosphoglycerate mutase family. As to quaternary structure, monomer. Requires Mn(2+) as cofactor.

It carries out the reaction (2R)-2-phosphoglycerate = (2R)-3-phosphoglycerate. The protein operates within carbohydrate degradation; glycolysis; pyruvate from D-glyceraldehyde 3-phosphate: step 3/5. Catalyzes the interconversion of 2-phosphoglycerate and 3-phosphoglycerate. The protein is 2,3-bisphosphoglycerate-independent phosphoglycerate mutase of Clostridium perfringens (strain ATCC 13124 / DSM 756 / JCM 1290 / NCIMB 6125 / NCTC 8237 / Type A).